The chain runs to 501 residues: ATP synthase subunit alpha (501 aa).

Position 169-176 (169-176 (GDRQTGKT)) interacts with ATP.

Belongs to the ATPase alpha/beta chains family. In terms of assembly, F-type ATPases have 2 components, CF(1) - the catalytic core - and CF(0) - the membrane proton channel. CF(1) has five subunits: alpha(3), beta(3), gamma(1), delta(1), epsilon(1). CF(0) has three main subunits: a(1), b(2) and c(9-12). The alpha and beta chains form an alternating ring which encloses part of the gamma chain. CF(1) is attached to CF(0) by a central stalk formed by the gamma and epsilon chains, while a peripheral stalk is formed by the delta and b chains.

The protein localises to the cell membrane. The enzyme catalyses ATP + H2O + 4 H(+)(in) = ADP + phosphate + 5 H(+)(out). Functionally, produces ATP from ADP in the presence of a proton gradient across the membrane. The alpha chain is a regulatory subunit. The sequence is that of ATP synthase subunit alpha from Desulforamulus reducens (strain ATCC BAA-1160 / DSM 100696 / MI-1) (Desulfotomaculum reducens).